A 126-amino-acid chain; its full sequence is Phosphoribosyl-AMP cyclohydrolase (126 aa).

Asp73 contributes to the Mg(2+) binding site. A Zn(2+)-binding site is contributed by Cys74. 2 residues coordinate Mg(2+): Asp75 and Asp77. Cys91 and Cys98 together coordinate Zn(2+).

The protein belongs to the PRA-CH family. As to quaternary structure, homodimer. Requires Mg(2+) as cofactor. Zn(2+) serves as cofactor.

It localises to the cytoplasm. The catalysed reaction is 1-(5-phospho-beta-D-ribosyl)-5'-AMP + H2O = 1-(5-phospho-beta-D-ribosyl)-5-[(5-phospho-beta-D-ribosylamino)methylideneamino]imidazole-4-carboxamide. The protein operates within amino-acid biosynthesis; L-histidine biosynthesis; L-histidine from 5-phospho-alpha-D-ribose 1-diphosphate: step 3/9. In terms of biological role, catalyzes the hydrolysis of the adenine ring of phosphoribosyl-AMP. This chain is Phosphoribosyl-AMP cyclohydrolase, found in Solibacter usitatus (strain Ellin6076).